A 411-amino-acid polypeptide reads, in one-letter code: Phosphoglycerate kinase (411 aa).

The segment at 1–24 (MTGLCPLHQPSPLDHPHSGGTPMQ) is disordered. Substrate is bound by residues 41-43 (DYN), Arg-56, 79-82 (HFGR), Arg-139, and Arg-172. ATP is bound by residues Lys-222, Gly-310, Glu-341, and 369–372 (GGDS).

Belongs to the phosphoglycerate kinase family. In terms of assembly, monomer.

Its subcellular location is the cytoplasm. It carries out the reaction (2R)-3-phosphoglycerate + ATP = (2R)-3-phospho-glyceroyl phosphate + ADP. Its pathway is carbohydrate degradation; glycolysis; pyruvate from D-glyceraldehyde 3-phosphate: step 2/5. The sequence is that of Phosphoglycerate kinase from Deinococcus radiodurans (strain ATCC 13939 / DSM 20539 / JCM 16871 / CCUG 27074 / LMG 4051 / NBRC 15346 / NCIMB 9279 / VKM B-1422 / R1).